Here is a 178-residue protein sequence, read N- to C-terminus: Twist-related protein (178 aa).

A bHLH domain is found at Gln-20–Leu-71.

Efficient DNA binding requires dimerization with another bHLH protein. Homodimer. Forms a heterodimer with hlh-2. Expressed in defecation-associated muscles and neuron-like cells in the head at the L1 stage. In later larvae, expressed in SM cells and their descendants. Not expressed in differentiated body wall or sex muscles.

Its subcellular location is the nucleus. In terms of biological role, acts as a transcriptional regulator. Involved in postembryonic mesodermal cell fate specification. Activates ceh-24 and egl-15 during mesodermal patterning. This Caenorhabditis elegans protein is Twist-related protein (hlh-8).